The sequence spans 84 residues: Cell division topological specificity factor (84 aa).

The protein belongs to the MinE family.

Prevents the cell division inhibition by proteins MinC and MinD at internal division sites while permitting inhibition at polar sites. This ensures cell division at the proper site by restricting the formation of a division septum at the midpoint of the long axis of the cell. The polypeptide is Cell division topological specificity factor (Hydrogenovibrio crunogenus (strain DSM 25203 / XCL-2) (Thiomicrospira crunogena)).